Here is a 212-residue protein sequence, read N- to C-terminus: Probable GTP-binding protein EngB (212 aa).

The EngB-type G domain occupies 40 to 212 (SLPEIAFVGK…KASLAKCIKA (173 aa)). GTP is bound by residues 48–55 (GKSNVGKS), 75–79 (GRTRQ), 93–96 (DLPG), 160–163 (TKSD), and 191–193 (VSS). Residues S55 and T77 each contribute to the Mg(2+) site.

It belongs to the TRAFAC class TrmE-Era-EngA-EngB-Septin-like GTPase superfamily. EngB GTPase family. Requires Mg(2+) as cofactor.

Necessary for normal cell division and for the maintenance of normal septation. This is Probable GTP-binding protein EngB from Rickettsia akari (strain Hartford).